The sequence spans 164 residues: ATP synthase subunit b 1 (164 aa).

Residues 4 to 24 (MELAELWVAVAFFVFVGILLY) form a helical membrane-spanning segment.

This sequence belongs to the ATPase B chain family. In terms of assembly, F-type ATPases have 2 components, F(1) - the catalytic core - and F(0) - the membrane proton channel. F(1) has five subunits: alpha(3), beta(3), gamma(1), delta(1), epsilon(1). F(0) has three main subunits: a(1), b(2) and c(10-14). The alpha and beta chains form an alternating ring which encloses part of the gamma chain. F(1) is attached to F(0) by a central stalk formed by the gamma and epsilon chains, while a peripheral stalk is formed by the delta and b chains.

It localises to the cell inner membrane. F(1)F(0) ATP synthase produces ATP from ADP in the presence of a proton or sodium gradient. F-type ATPases consist of two structural domains, F(1) containing the extramembraneous catalytic core and F(0) containing the membrane proton channel, linked together by a central stalk and a peripheral stalk. During catalysis, ATP synthesis in the catalytic domain of F(1) is coupled via a rotary mechanism of the central stalk subunits to proton translocation. Its function is as follows. Component of the F(0) channel, it forms part of the peripheral stalk, linking F(1) to F(0). This Azorhizobium caulinodans (strain ATCC 43989 / DSM 5975 / JCM 20966 / LMG 6465 / NBRC 14845 / NCIMB 13405 / ORS 571) protein is ATP synthase subunit b 1.